We begin with the raw amino-acid sequence, 136 residues long: Class I hydrophobin 16 (136 aa).

The N-terminal stretch at 1 to 19 (MKFTSVIALVATAATLVGA) is a signal peptide. Cystine bridges form between Cys-58-Cys-115, Cys-65-Cys-109, Cys-66-Cys-99, and Cys-116-Cys-129. Residue Asn-74 is glycosylated (N-linked (GlcNAc...) asparagine).

This sequence belongs to the fungal hydrophobin family. In terms of assembly, self-assembles to form functional amyloid fibrils called rodlets. Self-assembly into fibrillar rodlets occurs spontaneously at hydrophobic:hydrophilic interfaces and the rodlets further associate laterally to form amphipathic monolayers.

It localises to the secreted. Its subcellular location is the cell wall. Its function is as follows. Aerial growth, conidiation, and dispersal of filamentous fungi in the environment rely upon a capability of their secreting small amphipathic proteins called hydrophobins (HPBs) with low sequence identity. Class I can self-assemble into an outermost layer of rodlet bundles on aerial cell surfaces, conferring cellular hydrophobicity that supports fungal growth, development and dispersal; whereas Class II form highly ordered films at water-air interfaces through intermolecular interactions but contribute nothing to the rodlet structure. Hydph16 is a class I hydrophobin that has specific functions in aerial mycelium formation, cell wall stress protection, and cell wall structure formation, but does not seem to be involved in mycelial hydrophobicity. Specifically functions in resisting cell wall synthesis inhibitors. The sequence is that of Class I hydrophobin 16 from Pleurotus ostreatus (strain PC15) (Oyster mushroom).